The primary structure comprises 391 residues: ATP phosphoribosyltransferase regulatory subunit (391 aa).

Belongs to the class-II aminoacyl-tRNA synthetase family. HisZ subfamily. In terms of assembly, heteromultimer composed of HisG and HisZ subunits.

The protein localises to the cytoplasm. The protein operates within amino-acid biosynthesis; L-histidine biosynthesis; L-histidine from 5-phospho-alpha-D-ribose 1-diphosphate: step 1/9. In terms of biological role, required for the first step of histidine biosynthesis. May allow the feedback regulation of ATP phosphoribosyltransferase activity by histidine. This Bacillus pumilus (strain SAFR-032) protein is ATP phosphoribosyltransferase regulatory subunit.